Here is a 372-residue protein sequence, read N- to C-terminus: Phospho-2-dehydro-3-deoxyheptonate aldolase, tyrosine-inhibited (372 aa).

This sequence belongs to the class-I DAHP synthase family.

Its subcellular location is the cytoplasm. The protein resides in the nucleus. It catalyses the reaction D-erythrose 4-phosphate + phosphoenolpyruvate + H2O = 7-phospho-2-dehydro-3-deoxy-D-arabino-heptonate + phosphate. It participates in metabolic intermediate biosynthesis; chorismate biosynthesis; chorismate from D-erythrose 4-phosphate and phosphoenolpyruvate: step 1/7. Functionally, stereospecific condensation of phosphoenolpyruvate (PEP) and D-erythrose-4-phosphate (E4P) giving rise to 3-deoxy-D-arabino-heptulosonate-7-phosphate (DAHP). In Schizosaccharomyces pombe (strain 972 / ATCC 24843) (Fission yeast), this protein is Phospho-2-dehydro-3-deoxyheptonate aldolase, tyrosine-inhibited (aro4).